A 578-amino-acid polypeptide reads, in one-letter code: Longifolene synthase (578 aa).

Residues aspartate 331, aspartate 335, and aspartate 475 each coordinate Mg(2+). The short motif at 331-335 (DDLYD) is the DDXXD motif element.

It belongs to the terpene synthase family. Tpsd subfamily. The cofactor is Mg(2+). Requires Mn(2+) as cofactor.

Its subcellular location is the cytoplasm. It carries out the reaction (2E,6E)-farnesyl diphosphate = longifolene + diphosphate. It participates in sesquiterpene biosynthesis. It functions in the pathway terpene metabolism; oleoresin biosynthesis. Its function is as follows. Involved in defensive oleoresin formation in conifers in response to insect attack or other injury. Involved in sesquiterpene (C15) olefins biosynthesis. Produces mainly longifolene, but also multiple minor products including alpha-longipinene, alpha-longicyclene, E-beta-farnesene, longiborneol, cyclosativene, beta-longipinene, and 12 other sesquiterpenes when used with farnesyl diphosphate (FPP) as substrate. The chain is Longifolene synthase (TPS-Lon) from Picea abies (Norway spruce).